The sequence spans 471 residues: Cleavage and polyadenylation specificity factor subunit 7 (471 aa).

Residues 34–68 (VLTAASQPSDDRSSSTEPPPPVRQEPAPKPNNKTP) form a disordered region. The span at 50-62 (EPPPPVRQEPAPK) shows a compositional bias: pro residues. Residues 82–162 (AAVYVGSFSW…EKVDVRPATR (81 aa)) form the RRM domain. Residues 176–220 (ECVRVPRGGIPPRAHSRDSSDSADGRATPSENLVPSSARVDKPPS) form a disordered region. The segment covering 190–199 (HSRDSSDSAD) has biased composition (basic and acidic residues). Phosphothreonine is present on T203. S205 is subject to Phosphoserine. A Glycyl lysine isopeptide (Lys-Gly) (interchain with G-Cter in SUMO2) cross-link involves residue K354. The tract at residues 409–471 (SVGASGSSSR…HRDRERDRHH (63 aa)) is disordered. Phosphoserine is present on residues S413 and S423. Residues 418–469 (RKRHRSRERSPSRSRESSRRHRDLLHNEDRHDDYFQERNREHERHRDRERDR) form an arg/Ser-rich domain region. Composition is skewed to basic and acidic residues over residues 425-434 (ERSPSRSRES) and 441-471 (LLHNEDRHDDYFQERNREHERHRDRERDRHH).

The protein belongs to the RRM CPSF6/7 family. As to quaternary structure, component of the cleavage factor Im (CFIm) complex which is a heterotetramer composed of two subunits of NUDT21/CPSF5 and two subunits of CPSF6 or CPSF7 or a heterodimer of CPSF6 and CPSF7. The cleavage factor Im (CFIm) complex associates with the CPSF and CSTF complexes to promote the assembly of the core mRNA 3'-processing machinery. Interacts with NUDT21/CPSF5. Interacts (via Arg/Ser-rich domain) with FIP1L1 (preferentially via unphosphorylated form and Arg/Glu/Asp-rich region); this interaction mediates, at least in part, the interaction between the CFIm and CPSF complexes and may be inhibited by CPSF7 hyper-phosphorylation. Phosphorylated. In terms of processing, asymmetrically dimethylated on arginine residues by PRMT1.

The protein resides in the nucleus. It is found in the cytoplasm. Functionally, component of the cleavage factor Im (CFIm) complex that functions as an activator of the pre-mRNA 3'-end cleavage and polyadenylation processing required for the maturation of pre-mRNA into functional mRNAs. CFIm contributes to the recruitment of multiprotein complexes on specific sequences on the pre-mRNA 3'-end, so called cleavage and polyadenylation signals (pA signals). Most pre-mRNAs contain multiple pA signals, resulting in alternative cleavage and polyadenylation (APA) producing mRNAs with variable 3'-end formation. The CFIm complex acts as a key regulator of cleavage and polyadenylation site choice during APA through its binding to 5'-UGUA-3' elements localized in the 3'-untranslated region (UTR) for a huge number of pre-mRNAs. CPSF7 activates directly the mRNA 3'-processing machinery. Binds to pA signals in RNA substrates. The sequence is that of Cleavage and polyadenylation specificity factor subunit 7 from Mus musculus (Mouse).